Reading from the N-terminus, the 938-residue chain is Ankyrin repeat and LEM domain-containing protein 2 (938 aa).

Residues 1–12 (MLWPRLAAAEWA) are Lumenal-facing. A helical; Signal-anchor for type III membrane protein membrane pass occupies residues 13-32 (ALAWELLGASVLLIAVRWLV). At 33 to 938 (RRLGPRPGGL…MARLAELAAL (906 aa)) the chain is on the cytoplasmic side. The 45-residue stretch at 69 to 113 (LARLKLLNPDDLREEIVKAGLKCGPITSTTRFIFEKKLAQALLEQ) folds into the LEM domain. 2 positions are modified to phosphoserine: Ser259 and Ser268. The stretch at 411–440 (GYDTPLHFACKFGNADVVNVLSSHHLIVKN) is one ANK repeat. Phosphoserine is present on residues Ser488, Ser496, Ser512, and Ser528. Over residues 609 to 627 (GKKAQQETGEREASCRDKA) the composition is skewed to basic and acidic residues. The disordered stretch occupies residues 609-636 (GKKAQQETGEREASCRDKATTSGSNSIS). 4 positions are modified to phosphoserine: Ser662, Ser804, Ser896, and Ser914. The interval 870-924 (RQSWPSPAVKGRFKSQLPDLSGPHSYSPGRNSVAGSNPAKPGLGSPGRYSPVHGS) is disordered.

It belongs to the ANKLE2 family. Interacts with BAF/BANF1. Interacts with protein phosphatase 2A (PP2A) components PPP2C (PPP2CA or PPP2CB) and PPP2R1A. As to quaternary structure, (Microbial infection) May interact with non-structural protein 4A/NS4A from Zika virus strains Mr-766 or French Polynesia 10087PF/2013; the interaction may inhibit ANKLE2 function and contribute to defects in brain development, such as microcephaly.

The protein localises to the endoplasmic reticulum membrane. Functionally, involved in mitotic nuclear envelope reassembly by promoting dephosphorylation of BAF/BANF1 during mitotic exit. Coordinates the control of BAF/BANF1 dephosphorylation by inhibiting VRK1 kinase and promoting dephosphorylation of BAF/BANF1 by protein phosphatase 2A (PP2A), thereby facilitating nuclear envelope assembly. May regulate nuclear localization of VRK1 in non-dividing cells. It is unclear whether it acts as a real PP2A regulatory subunit or whether it is involved in recruitment of the PP2A complex. Involved in brain development. The polypeptide is Ankyrin repeat and LEM domain-containing protein 2 (ANKLE2) (Homo sapiens (Human)).